The chain runs to 786 residues: Digalactosyldiacylglycerol synthase 1, chloroplastic (786 aa).

The transit peptide at 1–25 directs the protein to the chloroplast; that stretch reads MASQRQPPSSSNAFSFLSKGWREVR.

It belongs to the glycosyltransferase group 1 family. Glycosyltransferase 4 subfamily. As to expression, high expression in nodules infected cells, but low in nodule inner cortex and root central cylinder.

The protein resides in the plastid. Its subcellular location is the chloroplast outer membrane. The protein localises to the plastid outer membrane. The enzyme catalyses a 1,2-diacyl-3-O-(beta-D-galactosyl)-sn-glycerol + UDP-alpha-D-galactose = a 1,2-diacyl-3-O-[alpha-D-galactosyl-(1-&gt;6)-beta-D-galactosyl]-sn-glycerol + UDP + H(+). In terms of biological role, involved in the synthesis of diacylglycerol galactolipids that are specifically found in thylakoid and in nodule peribacteroid membranes. Specific for alpha-glycosidic linkages. The protein is Digalactosyldiacylglycerol synthase 1, chloroplastic of Lotus japonicus (Lotus corniculatus var. japonicus).